A 386-amino-acid polypeptide reads, in one-letter code: MTGLDMEIIFAKIKEEYARTDDVGKRQIQGHIRELQVGFYSDWDVVMRLSSGPLQVALTKVGIDLGIFRSLKESDTPITLAEIVKKTGASPRLLGRILRTQAAFGLIKETGPQEYTSSAFTDVFANSDAAGAVVQLFDISGPCTQILPDFLAERNYQDITSNKDCVFQKAFGSDLTMFEWMPQHPKHMESLGHLMALERPVSWVDHYPVLEELGGFPAPDKVLMVDIGGGFGQQSKALRAKFPDLPGRLIVQDIPQTLANAQPAAGIEFMEHNFFEPQPIQNAKFYYLRHVFHDWPDEQCVLILKQIIPAMGPESQILIDEMVIPSTGVPWQAAFTDLLMMNSLGGVERTRAEWDDLMEQVGLEIIQSKVYDSKEQAILVAVPKRT.

137–150 (FDISGPCTQILPDF) serves as a coordination point for substrate. Residues 177–197 (MFEWMPQHPKHMESLGHLMAL) are substrate binding. S-adenosyl-L-methionine contacts are provided by residues 228–229 (GG), D253, 273–274 (NF), and R289. The active-site Proton acceptor is the H293.

The protein belongs to the class I-like SAM-binding methyltransferase superfamily. Cation-independent O-methyltransferase family. COMT subfamily.

The catalysed reaction is 6-demethylsterigmatocystin + S-adenosyl-L-methionine = sterigmatocystin + S-adenosyl-L-homocysteine + H(+). It functions in the pathway mycotoxin biosynthesis; aflatoxin biosynthesis. In terms of biological role, demethylsterigmatocystin 6-O-methyltransferase; part of the gene cluster that mediates the biosynthesis of aflatoxins, a group of polyketide-derived furanocoumarins, and part of the most toxic and carcinogenic compounds among the known mycotoxins. The four major aflatoxins produced by A.parasiticus are aflatoxin B1 (AFB1), aflatoxin B2 (AFB2), aflatoxin G1 (AFG1) and aflatoxin G2 (AFG2). Within the aflatoxin pathway, the methyltransferase aflO then catalyzes the modification of demethylsterigmatocystin (DMST) to sterigmatocystin (ST), and of dihydrodemethylsterigmatocystin (DMDHST) to dihydrosterigmatocystin (DHST). The biosynthesis of aflatoxins begins with the norsolorinic acid synthase aflC that combines a hexanoyl starter unit produced by the fatty acid synthase aflA/aflB and 7 malonyl-CoA extender units to synthesize the precursor NOR. The second step is the conversion of NOR to averantin and requires the norsolorinic acid ketoreductase aflD, which catalyzes the dehydration of norsolorinic acid to form (1'S)-averantin. The norsolorinic acid reductases aflE and aflF may also play a role in the conversion of NOR to AVN. The cytochrome P450 monooxygenase aflG then catalyzes the hydroxylation of AVN to 5'hydroxyaverantin (HAVN). The next step is performed by the 5'-hydroxyaverantin dehydrogenase aflH that transforms HAVN to 5'-oxoaverantin (OAVN) which is further converted to averufin (AVF) by aflK that plays a dual role in the pathway, as a 5'-oxoaverantin cyclase that mediates conversion of 5'-oxoaverantin, as well as a versicolorin B synthase in a later step in the pathway. The averufin oxidase aflI catalyzes the conversion of AVF to versiconal hemiacetal acetate (VHA). VHA is then the substrate for the versiconal hemiacetal acetate esterase aflJ to yield versiconal (VAL). Versicolorin B synthase aflK then converts VAL to versicolorin B (VERB) by closing the bisfuran ring of aflatoxin which is required for DNA-binding, thus giving to aflatoxin its activity as a mutagen. Then, the activity of the versicolorin B desaturase aflL leads to versicolorin A (VERA). A branch point starts from VERB since it can also be converted to dihydrodemethylsterigmatocystin (DMDHST), probably also by aflL, VERA being a precursor for aflatoxins B1 and G1, and DMDHST for aflatoxins B2 and G2. Next, the versicolorin reductase aflM and the cytochrome P450 monooxygenase aflN are involved in conversion of VERA to demethylsterigmatocystin (DMST). AflX and aflY seem also involved in this step, through probable aflX-mediated epoxide ring-opening step following versicolorin A oxidation and aflY-mediated Baeyer-Villiger oxidation required for the formation of the xanthone ring. The methyltransferase aflO then leads to the modification of DMST to sterigmatocystin (ST), and of DMDHST to dihydrosterigmatocystin (DHST). Both ST and DHST are then substrates of the O-methyltransferase aflP to yield O-methylsterigmatocystin (OMST) and dihydro-O-methylsterigmatocystin (DHOMST), respectively. Finally OMST is converted to aflatoxins B1 and G1, and DHOMST to aflatoxins B2 and G2, via the action of several enzymes including O-methylsterigmatocystin oxidoreductase aflQ, the cytochrome P450 monooxygenase aflU, but also the NADH-dependent flavin oxidoreductase nadA which is specifically required for the synthesis of AFG1. The polypeptide is Demethylsterigmatocystin 6-O-methyltransferase (Aspergillus parasiticus (strain ATCC 56775 / NRRL 5862 / SRRC 143 / SU-1)).